The sequence spans 61 residues: Conotoxin Vn5.3 (61 aa).

Positions M1–G19 are cleaved as a signal peptide. The propeptide occupies V20–R50.

This sequence belongs to the conotoxin T superfamily. Post-translationally, contains 2 disulfide bonds that can be either 'C1-C3, C2-C4' or 'C1-C4, C2-C3', since these disulfide connectivities have been observed for conotoxins with cysteine framework V (for examples, see AC P0DQQ7 and AC P81755). As to expression, expressed by the venom duct.

It is found in the secreted. The sequence is that of Conotoxin Vn5.3 from Conus ventricosus (Mediterranean cone).